We begin with the raw amino-acid sequence, 198 residues long: Recombination protein RecR (198 aa).

A C4-type zinc finger spans residues C58–C73. The Toprim domain occupies S81–P175.

The protein belongs to the RecR family.

May play a role in DNA repair. It seems to be involved in an RecBC-independent recombinational process of DNA repair. It may act with RecF and RecO. In Clostridium acetobutylicum (strain ATCC 824 / DSM 792 / JCM 1419 / IAM 19013 / LMG 5710 / NBRC 13948 / NRRL B-527 / VKM B-1787 / 2291 / W), this protein is Recombination protein RecR.